Here is a 47-residue protein sequence, read N- to C-terminus: Large ribosomal subunit protein eL40 (47 aa).

The protein belongs to the eukaryotic ribosomal protein eL40 family.

The protein is Large ribosomal subunit protein eL40 of Methanocaldococcus jannaschii (strain ATCC 43067 / DSM 2661 / JAL-1 / JCM 10045 / NBRC 100440) (Methanococcus jannaschii).